The chain runs to 298 residues: uncharacterized protein (298 aa).

Residues 1–61 (MDIFISKKMR…TRKDNNISLN (61 aa)) enclose the HTH lysR-type domain. The H-T-H motif DNA-binding region spans 21–40 (IARAAEKIHMTASPFGKSIA).

It belongs to the LysR transcriptional regulatory family.

This is an uncharacterized protein from Escherichia coli (strain K12).